The primary structure comprises 759 residues: Xaa-Pro dipeptidyl-peptidase (759 aa).

Active-site charge relay system residues include Ser-347, Asp-467, and His-497.

The protein belongs to the peptidase S15 family. As to quaternary structure, homodimer.

It is found in the cytoplasm. The catalysed reaction is Hydrolyzes Xaa-Pro-|- bonds to release unblocked, N-terminal dipeptides from substrates including Ala-Pro-|-p-nitroanilide and (sequentially) Tyr-Pro-|-Phe-Pro-|-Gly-Pro-|-Ile.. Its function is as follows. Removes N-terminal dipeptides sequentially from polypeptides having unsubstituted N-termini provided that the penultimate residue is proline. The sequence is that of Xaa-Pro dipeptidyl-peptidase from Streptococcus gordonii (strain Challis / ATCC 35105 / BCRC 15272 / CH1 / DL1 / V288).